The chain runs to 376 residues: MSKGKVLLVLYEGGKHAEEQEKLLGCIENELGIRNFIEEQGYELVTTIDKDPEPTSTVDRELKDAEIVITTPFFPAYISRNRIAEAPNLKLCVTAGVGSDHVDLEAANERKITVTEVTGSNVVSVAEHVMATILVLIRNYNGGHQQAINGEWDIAGVAKNEYDLEDKIISTVGAGRIGYRVLERLVAFNPKKLLYYDYQELPAEAINRLNEASKLFNGRGDIVQRVEKLEDMVAQSDVVTINCPLHKDSRGLFNKKLISHMKDGAYLVNTARGAICVAEDVAEAVKSGKLAGYGGDVWDKQPAPKDHPWRTMDNKDHVGNAMTVHISGTSLDAQKRYAQGVKNILNSYFSKKFDYRPQDIIVQNGSYATRAYGQKK.

2 residues coordinate substrate: valine 97 and asparagine 121. Residues 176-177 (RI), aspartate 197, 244-248 (PLHKD), threonine 270, aspartate 296, and 325-328 (HISG) each bind NAD(+).

The protein belongs to the D-isomer specific 2-hydroxyacid dehydrogenase family. FDH subfamily. In terms of assembly, homodimer.

It is found in the cytoplasm. The catalysed reaction is formate + NAD(+) = CO2 + NADH. Functionally, catalyzes the NAD(+)-dependent oxidation of formate to carbon dioxide. Formate oxidation is the final step in the methanol oxidation pathway in methylotrophic microorganisms. Has a role in the detoxification of exogenous formate in non-methylotrophic organisms. The polypeptide is Formate dehydrogenase 1 (FDH1) (Saccharomyces cerevisiae (strain YJM789) (Baker's yeast)).